A 127-amino-acid chain; its full sequence is Apolipoprotein C-IV (127 aa).

The first 27 residues, 1 to 27, serve as a signal peptide directing secretion; it reads MSLLRNRLQDLPALCLCVLVLACIGAC.

Belongs to the apolipoprotein C4 family.

The protein resides in the secreted. Functionally, may participate in lipoprotein metabolism. This chain is Apolipoprotein C-IV (APOC4), found in Chlorocebus sabaeus (Green monkey).